The primary structure comprises 707 residues: DNA-binding protein RFX2 (707 aa).

A Phosphoserine modification is found at Ser33. Residues 204–279 (HLQWLLDNYE…YHYYGIRLKP (76 aa)) constitute a DNA-binding region (RFX-type winged-helix). The disordered stretch occupies residues 297–337 (QQPVHQKPRYRPAQKTDSLGESGSHSSLHSTPEQAMAAQSQ). Residues 315–337 (LGESGSHSSLHSTPEQAMAAQSQ) show a composition bias toward low complexity. Phosphoserine is present on Ser420.

The protein belongs to the RFX family. As to quaternary structure, homodimer; probably only forms homodimers in testis. Heterodimer; heterodimerizes with RFX1 and RFX3.

It is found in the nucleus. Its subcellular location is the cytoplasm. Its function is as follows. Transcription factor that acts as a key regulator of spermatogenesis. Acts by regulating expression of genes required for the haploid phase during spermiogenesis, such as genes required for cilium assembly and function. Recognizes and binds the X-box, a regulatory motif with DNA sequence 5'-GTNRCC(0-3N)RGYAAC-3' present on promoters. Probably activates transcription of the testis-specific histone gene H1-6. The chain is DNA-binding protein RFX2 (RFX2) from Bos taurus (Bovine).